The chain runs to 254 residues: Putative epimerase LsrE (254 aa).

Residues 14 to 34 form a helical membrane-spanning segment; sequence VALLASYPLSVGILAGQWIAL. 3 residues coordinate a divalent metal cation: His-50, Asp-52, and His-81. The active-site Proton acceptor is Asp-52. Residues His-81, 166–169, 199–201, and 221–222 each bind substrate; these read GYGS, DGS, and GS. A divalent metal cation is bound at residue Asp-199. The Proton donor role is filled by Asp-199.

Belongs to the ribulose-phosphate 3-epimerase family. A divalent metal cation is required as a cofactor.

Its subcellular location is the cell membrane. The protein is Putative epimerase LsrE (lsrE) of Salmonella paratyphi A (strain ATCC 9150 / SARB42).